The chain runs to 447 residues: Phosphoglucosamine mutase (447 aa).

The Phosphoserine intermediate role is filled by Ser106. Mg(2+)-binding residues include Ser106, Asp245, Asp247, and Asp249. Position 106 is a phosphoserine (Ser106).

This sequence belongs to the phosphohexose mutase family. The cofactor is Mg(2+). Post-translationally, activated by phosphorylation.

It carries out the reaction alpha-D-glucosamine 1-phosphate = D-glucosamine 6-phosphate. In terms of biological role, catalyzes the conversion of glucosamine-6-phosphate to glucosamine-1-phosphate. The protein is Phosphoglucosamine mutase of Cupriavidus pinatubonensis (strain JMP 134 / LMG 1197) (Cupriavidus necator (strain JMP 134)).